We begin with the raw amino-acid sequence, 719 residues long: Developmental regulator flbA (719 aa).

The segment covering 1-17 (MPTSISTAPLSQGSPPS) has biased composition (polar residues). Disordered regions lie at residues 1–39 (MPTS…STAA), 117–141 (IGST…SRKA), and 155–190 (LSPP…AAER). 2 stretches are compositionally biased toward low complexity: residues 123–135 (SSLR…GSLQ) and 158–171 (PLSD…QSSS). Residues 214 to 411 (QTSSRLLRMT…QDGPNVKSSV (198 aa)) are fungal-DR. One can recognise a DEP domain in the interval 425–511 (GLVGVKMARE…SKNAIYAITE (87 aa)). One can recognise an RGS domain in the interval 540 to 685 (SNNARLNHIL…FLRDPKYSAI (146 aa)). A disordered region spans residues 694-719 (LIGGGRSYSPTPGNVPERSMSRSQRS).

Required for asexual sporulation and normal colony development. May be involved in brlA activation. Could play a regulatory role in controlling the flug-initiated signal transduction pathway that triggers the asexual reproduction. This is Developmental regulator flbA (flbA) from Emericella nidulans (strain FGSC A4 / ATCC 38163 / CBS 112.46 / NRRL 194 / M139) (Aspergillus nidulans).